Reading from the N-terminus, the 272-residue chain is Putative hydro-lyase AZC_4080 (272 aa).

This sequence belongs to the D-glutamate cyclase family.

This is Putative hydro-lyase AZC_4080 from Azorhizobium caulinodans (strain ATCC 43989 / DSM 5975 / JCM 20966 / LMG 6465 / NBRC 14845 / NCIMB 13405 / ORS 571).